An 87-amino-acid chain; its full sequence is Small ribosomal subunit protein uS17 (87 aa).

This sequence belongs to the universal ribosomal protein uS17 family. In terms of assembly, part of the 30S ribosomal subunit.

Its function is as follows. One of the primary rRNA binding proteins, it binds specifically to the 5'-end of 16S ribosomal RNA. This Anoxybacillus flavithermus (strain DSM 21510 / WK1) protein is Small ribosomal subunit protein uS17.